Consider the following 358-residue polypeptide: MYDRLQAVEDRYDELNELLSDPDVVSDPKRLRDLSKEQSGITATVETYREYKNVNEQINETKELLGEKLDDEMREMAKEEFAELQKEKADLEERLKLLLVPKDPNDDKNVILEIRGAAGGDEAALFAGDLFRMYSKYAESRGWKVEIMDANPTGIGGYKEIIAMMNGNDAFSRMKYENGAHRVQRVPETESGGRIHTSTATVAILPEAEEVEIELHDKDIRTDTFASTGAGGQSVNTTMSAVRLTHIPTGIVVSMQDERSQLKNKDKAMKVLRARVYDKFEREAREEYDANRKSAVGTGDRSERIRTYNYPQNRVTDHRIGLTIQKLDQIMEGKLDEIIDALILEDQTSKLEHLNDAN.

At Q233 the chain carries N5-methylglutamine.

This sequence belongs to the prokaryotic/mitochondrial release factor family. In terms of processing, methylated by PrmC. Methylation increases the termination efficiency of RF1.

The protein resides in the cytoplasm. Its function is as follows. Peptide chain release factor 1 directs the termination of translation in response to the peptide chain termination codons UAG and UAA. The polypeptide is Peptide chain release factor 1 (Listeria monocytogenes serotype 4b (strain CLIP80459)).